We begin with the raw amino-acid sequence, 245 residues long: Orotidine 5'-phosphate decarboxylase (245 aa).

Residues D22, K44, D71–T80, T131, R192, Q201, G221, and R222 each bind substrate. Catalysis depends on K73, which acts as the Proton donor.

The protein belongs to the OMP decarboxylase family. Type 1 subfamily. Homodimer.

The catalysed reaction is orotidine 5'-phosphate + H(+) = UMP + CO2. The protein operates within pyrimidine metabolism; UMP biosynthesis via de novo pathway; UMP from orotate: step 2/2. Its function is as follows. Catalyzes the decarboxylation of orotidine 5'-monophosphate (OMP) to uridine 5'-monophosphate (UMP). This is Orotidine 5'-phosphate decarboxylase from Escherichia coli O45:K1 (strain S88 / ExPEC).